The sequence spans 365 residues: DNA replication and repair protein RecF (365 aa).

30–37 lines the ATP pocket; sequence GQNGSGKT.

It belongs to the RecF family.

It is found in the cytoplasm. In terms of biological role, the RecF protein is involved in DNA metabolism; it is required for DNA replication and normal SOS inducibility. RecF binds preferentially to single-stranded, linear DNA. It also seems to bind ATP. The protein is DNA replication and repair protein RecF of Shewanella woodyi (strain ATCC 51908 / MS32).